The following is a 157-amino-acid chain: Thioredoxin 2 (157 aa).

The N-terminal stretch at 1–22 (MKHILALVVFIISFFCFKDVNC) is a signal peptide. Residues 46–157 (LRMYNKMPRL…ELTSTIRKHL (112 aa)) enclose the Thioredoxin domain. Active-site nucleophile residues include Cys82 and Cys85. The cysteines at positions 82 and 85 are disulfide-linked.

The protein belongs to the thioredoxin family. In terms of assembly, monomer. Component of the translocon PTEX complex composed of HSP101, EXP2, PTEX150, PTEX88 and TRX2. Post-translationally, the disulfide bond between Cys-82 and Cys-85 acts as a redox-active center and is reduced by thioredoxin reductase TRXR.

Its function is as follows. Participates in various redox reactions through the reversible oxidation of its active center dithiol to a disulfide and catalyzes dithiol-disulfide exchange reactions. As part of the translocon PTEX complex, plays a role in the export of parasite proteins into the host erythrocyte. The translocon PTEX complex is a multi-protein machinery resident in the parasite parasitophorous vacuolar membrane, responsible for protein secretion into host cells. May contribute to the unfolding of proteins containing the PEXEL localization motif before their passage through the translocon or regulate the PTEX complex function. The polypeptide is Thioredoxin 2 (Plasmodium berghei (strain Anka)).